A 379-amino-acid chain; its full sequence is Putative cysteine desulfurase IscS 1 (379 aa).

Residues 71-72 (GT), Asn-151, Gln-179, and 199-201 (SGH) contribute to the pyridoxal 5'-phosphate site. An N6-(pyridoxal phosphate)lysine modification is found at Lys-202. Thr-237 contributes to the pyridoxal 5'-phosphate binding site. The active-site Cysteine persulfide intermediate is the Cys-325. Residue Cys-325 coordinates [2Fe-2S] cluster.

Belongs to the class-V pyridoxal-phosphate-dependent aminotransferase family. NifS/IscS subfamily. Pyridoxal 5'-phosphate serves as cofactor.

The catalysed reaction is (sulfur carrier)-H + L-cysteine = (sulfur carrier)-SH + L-alanine. Its function is as follows. Catalyzes the removal of elemental sulfur from cysteine to produce alanine. This chain is Putative cysteine desulfurase IscS 1 (iscS1), found in Bacillus subtilis (strain 168).